Here is a 677-residue protein sequence, read N- to C-terminus: MPGFLVRILPLLLVLLLLGPTRGLRNATQRMFEIDYSRDSFLKDGQPFRYISGSIHYSRVPRFYWKDRLLKMKMAGLNAIQTYVPWNFHEPWPGQYQFSEDHDVEYFLRLAHELGLLVILRPGPYICAEWEMGGLPAWLLEKESILLRSSDPDYLAAVDKWLGVLLPKMKPLLYQNGGPVITVQVENEYGSYFACDFDYLRFLQKRFRHHLGDDVVLFTTDGAHKTFLKCGALQGLYTTVDFGTGSNITDAFLSQRKCEPKGPLINSEFYTGWLDHWGQPHSTIKTEAVASSLYDILARGASVNLYMFIGGTNFAYWNGANSPYAAQPTSYDYDAPLSEAGDLTEKYFALRNIIQKFEKVPEGPIPPSTPKFAYGKVTLEKLKTVGAALDILCPSGPIKSLYPLTFIQVKQHYGFVLYRTTLPQDCSNPAPLSSPLNGVHDRAYVAVDGIPQGVLERNNVITLNITGKAGATLDLLVENMGRVNYGAYINDFKGLVSNLTLSSNILTDWTIFPLDTEDAVRSHLGGWGHRDSGHHDEAWAHNSSNYTLPAFYMGNFSIPSGIPDLPQDTFIQFPGWTKGQVWINGFNLGRYWPARGPQLTLFVPQHILMTSAPNTITVLELEWAPCSSDDPELCAVTFVDRPVIGSSVTYDHPSKPVEKRLMPPPPQKNKDSWLDHV.

A signal peptide spans 1–23 (MPGFLVRILPLLLVLLLLGPTRG). Positions 24 to 28 (LRNAT) are excised as a propeptide. A glycan (N-linked (GlcNAc...) asparagine) is linked at Asn26. Residues Tyr83, Glu129, and Asn187 each contribute to the substrate site. Glu188 serves as the catalytic Proton donor. Residues Cys195 and Cys230 are joined by a disulfide bond. The N-linked (GlcNAc...) asparagine glycan is linked to Asn247. Glu268 (nucleophile) is an active-site residue. Tyr333 is a binding site for substrate. Asn464, Asn498, Asn542, Asn545, and Asn555 each carry an N-linked (GlcNAc...) asparagine glycan. Cys626 and Cys634 are joined by a disulfide. Residues 650–677 (YDHPSKPVEKRLMPPPPQKNKDSWLDHV) form a disordered region. Basic and acidic residues-rich tracts occupy residues 652–661 (HPSKPVEKRL) and 668–677 (KNKDSWLDHV).

It belongs to the glycosyl hydrolase 35 family. In terms of assembly, homodimer. May form higher multimers. In terms of tissue distribution, detected in placenta (at protein level). Detected in fibroblasts and testis.

The protein localises to the lysosome. The protein resides in the cytoplasm. Its subcellular location is the perinuclear region. The enzyme catalyses Hydrolysis of terminal non-reducing beta-D-galactose residues in beta-D-galactosides.. In terms of biological role, cleaves beta-linked terminal galactosyl residues from gangliosides, glycoproteins, and glycosaminoglycans. Functionally, has no beta-galactosidase catalytic activity, but plays functional roles in the formation of extracellular elastic fibers (elastogenesis) and in the development of connective tissue. Seems to be identical to the elastin-binding protein (EBP), a major component of the non-integrin cell surface receptor expressed on fibroblasts, smooth muscle cells, chondroblasts, leukocytes, and certain cancer cell types. In elastin producing cells, associates with tropoelastin intracellularly and functions as a recycling molecular chaperone which facilitates the secretions of tropoelastin and its assembly into elastic fibers. The chain is Beta-galactosidase (GLB1) from Homo sapiens (Human).